The sequence spans 219 residues: Casparian strip membrane protein 3 (219 aa).

Residues 1 to 43 are disordered; it reads MDPGREDEVPLAATSPESRRTRSNGRGKATVGDAPPPAETVVS. The Cytoplasmic segment spans residues 1–57; the sequence is MDPGREDEVPLAATSPESRRTRSNGRGKATVGDAPPPAETVVSTKAAPLPTGGWKKG. A helical membrane pass occupies residues 58–78; sequence IAILDFILRLGAIGAAMGASI. Topologically, residues 79 to 108 are extracellular; it reads LMGTNEQILPFFTQFLQFHAQWDDFPVFKL. Residues 109 to 129 traverse the membrane as a helical segment; that stretch reads FVVLNALAGGFLILSLPLSIV. The Cytoplasmic portion of the chain corresponds to 130–147; it reads CIVRPLAVGPRFLLLITD. Residues 148–168 traverse the membrane as a helical segment; it reads LVNMATVIAAASAAAAIVYVA. Topologically, residues 169–193 are extracellular; the sequence is HNGSQDANWIAICQQFTDFCQGTSE. N-linked (GlcNAc...) asparagine glycosylation occurs at asparagine 170. A helical transmembrane segment spans residues 194-214; it reads AVVVSFVAAVFLVCLIVVSTL. Residues 215 to 219 lie on the Cytoplasmic side of the membrane; sequence ALKRT.

This sequence belongs to the Casparian strip membrane proteins (CASP) family. As to quaternary structure, homodimer and heterodimers.

The protein localises to the cell membrane. Functionally, regulates membrane-cell wall junctions and localized cell wall deposition. Required for establishment of the Casparian strip membrane domain (CSD) and the subsequent formation of Casparian strips, a cell wall modification of the root endodermis that determines an apoplastic barrier between the intraorganismal apoplasm and the extraorganismal apoplasm and prevents lateral diffusion. In Lotus japonicus (Lotus corniculatus var. japonicus), this protein is Casparian strip membrane protein 3.